Here is a 77-residue protein sequence, read N- to C-terminus: uncharacterized protein (77 aa).

In terms of domain architecture, Peptidase A1 spans 1 to 77 (MAFERQGKIE…VAILDGKLVW (77 aa)).

This is an uncharacterized protein from Saccharomyces cerevisiae (strain ATCC 204508 / S288c) (Baker's yeast).